Reading from the N-terminus, the 470-residue chain is ATP synthase subunit beta (470 aa).

Residue 155 to 162 coordinates ATP; the sequence is GGAGVGKT.

Belongs to the ATPase alpha/beta chains family. In terms of assembly, F-type ATPases have 2 components, CF(1) - the catalytic core - and CF(0) - the membrane proton channel. CF(1) has five subunits: alpha(3), beta(3), gamma(1), delta(1), epsilon(1). CF(0) has three main subunits: a(1), b(2) and c(9-12). The alpha and beta chains form an alternating ring which encloses part of the gamma chain. CF(1) is attached to CF(0) by a central stalk formed by the gamma and epsilon chains, while a peripheral stalk is formed by the delta and b chains.

The protein resides in the cell membrane. It carries out the reaction ATP + H2O + 4 H(+)(in) = ADP + phosphate + 5 H(+)(out). Produces ATP from ADP in the presence of a proton gradient across the membrane. The catalytic sites are hosted primarily by the beta subunits. This is ATP synthase subunit beta from Pectinatus frisingensis.